The chain runs to 463 residues: DDB1- and CUL4-associated factor 12-like protein 1 (463 aa).

A disordered region spans residues 1-35 (MAQQQTGSRKRKAPAVEADAESSPSQGLAAADGEG). 6 WD repeats span residues 87–137 (LTER…PLLR), 138–184 (DSEA…SLDP), 185–252 (LCLG…DVEA), 253–297 (IPRA…ALSR), 298–341 (LLSI…QQNI), and 342–376 (RPLC…LFYD).

It belongs to the WD repeat DCAF12 family.

This is DDB1- and CUL4-associated factor 12-like protein 1 (DCAF12L1) from Homo sapiens (Human).